Reading from the N-terminus, the 757-residue chain is RNA exonuclease 3 (757 aa).

2 disordered regions span residues 56–259 and 474–590; these read VKRE…AEHL and ESLD…CDQA. Residues 120–132 show a composition bias toward basic and acidic residues; sequence EGGRAEGAEKKEF. Composition is skewed to polar residues over residues 145–172, 202–223, and 230–240; these read TPHA…SSVS, QPSS…SSPK, and MTTSASPSQSR. Composition is skewed to low complexity over residues 244 to 253 and 474 to 502; these read RNTSASPSSS and ESLD…KTAS. Residues 503–516 are compositionally biased toward polar residues; the sequence is RPASTPTKSLTSSL. Basic and acidic residues-rich tracts occupy residues 543–557 and 565–581; these read REPD…RGIG and SQER…RVRE. Residues 597-751 enclose the Exonuclease domain; sequence VVAVDCEMLY…EDALAALDVV (155 aa).

It belongs to the REXO1/REXO3 family.

Its subcellular location is the cytoplasm. It is found in the nucleus. 3' to 5' exoribonuclease required for proper 3' end maturation of MRP RNA and of the U5L snRNA. In Yarrowia lipolytica (strain CLIB 122 / E 150) (Yeast), this protein is RNA exonuclease 3 (REX3).